Reading from the N-terminus, the 422-residue chain is FAD-dependent monooxygenase ptmM (422 aa).

The chain crosses the membrane as a helical span at residues V8–L24. Positions 35, 49, 108, 308, and 321 each coordinate FAD.

The protein belongs to the paxM FAD-dependent monooxygenase family. Requires FAD as cofactor.

Its subcellular location is the membrane. The protein operates within secondary metabolite biosynthesis. FAD-dependent monooxygenase; part of the gene cluster that mediates the biosynthesis of the indole diterpenes penitrems. The geranylgeranyl diphosphate (GGPP) synthase ptmG catalyzes the first step in penitrem biosynthesis via conversion of farnesyl pyrophosphate and isopentyl pyrophosphate into geranylgeranyl pyrophosphate (GGPP). Condensation of indole-3-glycerol phosphate with GGPP by the prenyl transferase ptmC then forms 3-geranylgeranylindole (3-GGI). Epoxidation by the FAD-dependent monooxygenase ptmM leads to a epoxidized-GGI that is substrate of the terpene cyclase ptmB for cyclization to yield paspaline. Paspaline is subsequently converted to 13-desoxypaxilline by the cytochrome P450 monooxygenase ptmP, the latter being then converted to paxilline by the cytochrome P450 monooxygenase ptmQ. Paxilline is converted to beta-paxitriol via C-10 ketoreduction by the short-chain dehydrogenase ptmH which can be monoprenylated at the C-20 by the indole diterpene prenyltransferase ptmD. A two-step elimination (acetylation and elimination) process performed by the O-acetyltransferase ptmV and ptmI leads to the production of the prenylated form of penijanthine. The FAD-linked oxidoreductase ptmO then converts the prenylated form of penijanthine into PC-M5 which is in turn transformed into PC-M4 by the aromatic dimethylallyltransferase ptmE. Five sequential oxidative transformations performed by the cytochrome P450 monooxygenases ptmK, ptmU, ptmL, ptmN and ptmJ yield the various penitrem compounds. PtmK, ptmU and ptmM are involved in the formation of the key bicyclic ring of penitrem C via the formation of the intermediates secopenitrem D and penitrem D. PtmL catalyzes the epoxidation of penitrem D and C to yield penitrem B and F, respectively. PtmJ catalyzes the last benzylic hydroxylation to convert penitrem B to prenitrem E and penitrem F to penitrem A. This Penicillium ochrochloron protein is FAD-dependent monooxygenase ptmM.